A 162-amino-acid chain; its full sequence is Disulfide bond formation protein B (162 aa).

Residues 1–8 (MTPLFRKA) lie on the Cytoplasmic side of the membrane. A helical transmembrane segment spans residues 9-25 (VWLLFAVSVCAFAGSLA). Over 26-43 (AQYVLGMEPCVLCISQRL) the chain is Periplasmic. A disulfide bridge links Cys-35 with Cys-38. Residues 44–60 (CVLATALCTAIVLMCRP) traverse the membrane as a helical segment. Residues 61-67 (RRRAGGL) lie on the Cytoplasmic side of the membrane. Residues 68-85 (FGAVFISIPAVTGISVAA) traverse the membrane as a helical segment. The Periplasmic portion of the chain corresponds to 86–141 (YQLWLQSLPPGTAPSCGAPWTFRLKGWSLFDWFEPVVRGFGNCAEPDYLLGVALPV). Cys-101 and Cys-128 are joined by a disulfide. A helical membrane pass occupies residues 142–160 (WSAAYFLAVVLTVWWAWAR). Over 161–162 (AK) the chain is Cytoplasmic.

It belongs to the DsbB family.

Its subcellular location is the cell inner membrane. Functionally, required for disulfide bond formation in some periplasmic proteins. Acts by oxidizing the DsbA protein. This Neisseria meningitidis serogroup C / serotype 2a (strain ATCC 700532 / DSM 15464 / FAM18) protein is Disulfide bond formation protein B.